The following is a 136-amino-acid chain: Ribosome-binding factor A (136 aa).

The tract at residues 1–22 (MNTAGPAGKLAGHAASGPTQRQ) is disordered.

This sequence belongs to the RbfA family. As to quaternary structure, monomer. Binds 30S ribosomal subunits, but not 50S ribosomal subunits or 70S ribosomes.

The protein resides in the cytoplasm. Its function is as follows. One of several proteins that assist in the late maturation steps of the functional core of the 30S ribosomal subunit. Associates with free 30S ribosomal subunits (but not with 30S subunits that are part of 70S ribosomes or polysomes). Required for efficient processing of 16S rRNA. May interact with the 5'-terminal helix region of 16S rRNA. The polypeptide is Ribosome-binding factor A (Gluconacetobacter diazotrophicus (strain ATCC 49037 / DSM 5601 / CCUG 37298 / CIP 103539 / LMG 7603 / PAl5)).